A 214-amino-acid chain; its full sequence is Probable transaldolase (214 aa).

Residue Lys-83 is the Schiff-base intermediate with substrate of the active site.

The protein belongs to the transaldolase family. Type 3B subfamily.

It is found in the cytoplasm. The catalysed reaction is D-sedoheptulose 7-phosphate + D-glyceraldehyde 3-phosphate = D-erythrose 4-phosphate + beta-D-fructose 6-phosphate. It functions in the pathway carbohydrate degradation; pentose phosphate pathway; D-glyceraldehyde 3-phosphate and beta-D-fructose 6-phosphate from D-ribose 5-phosphate and D-xylulose 5-phosphate (non-oxidative stage): step 2/3. Its function is as follows. Transaldolase is important for the balance of metabolites in the pentose-phosphate pathway. The sequence is that of Probable transaldolase from Leptospira biflexa serovar Patoc (strain Patoc 1 / Ames).